The following is a 422-amino-acid chain: Terminase, large subunit (422 aa).

The tract at residues 1–198 is ATPase activity; sequence MKKVRLSEKF…PANTFVDHST (198 aa). Residues 33–40 carry the Walker A motif motif; that stretch reads GGRGSAKS. Residues 130-135 carry the Walker B motif motif; the sequence is GMWIEE. The active-site For ATPase activity is Glu135. Residues 232–422 form a nuclease activity and binding to the portal protein region; the sequence is ALGSGVVPFE…MKKGGVSLWG (191 aa). Asp266, Asp321, His400, and Asp403 together coordinate Mn(2+).

As to quaternary structure, monomer. Interacts with the terminase small subunit; the active complex is probably composed of two decameric ring-shaped terminase small subunit and two monomeric terminase large subunit. Interacts with the portal protein. Mn(2+) serves as cofactor. It depends on Mg(2+) as a cofactor.

Functionally, the terminase large subunit acts as an ATP driven molecular motor necessary for viral DNA translocation into empty capsids and as an endonuclease that cuts the viral genome to initiate and to end a packaging reaction. The terminase lies at a unique vertex of the procapsid and is composed of two subunits, a small terminase subunit involved in viral DNA recognition (packaging sequence), and a large terminase subunit possessing endonucleolytic and ATPase activities. Both terminase subunits heterooligomerize and are docked on the portal protein to form the packaging machine. The terminase large subunit exhibits endonuclease activity and cleaves the viral genome concatemer once the capsid is full (headful packaging). Once the capsid is packaged with the DNA, the terminase complex is substituted by the adapter (gp15) and the stopper protein (gp16) that form the connector. This Bacillus phage SPP1 (Bacteriophage SPP1) protein is Terminase, large subunit (2).